We begin with the raw amino-acid sequence, 1545 residues long: Pentafunctional AROM polypeptide (1545 aa).

Residues M1–D383 form a 3-dehydroquinate synthase region. Residues D44–N46, E82–K85, G113–V115, and D118 contribute to the NAD(+) site. R129 provides a ligand contact to 7-phospho-2-dehydro-3-deoxy-D-arabino-heptonate. An NAD(+)-binding site is contributed by T138 to S139. 7-phospho-2-dehydro-3-deoxy-D-arabino-heptonate-binding residues include D145 and K151. An NAD(+)-binding site is contributed by K160. N161 is a 7-phospho-2-dehydro-3-deoxy-D-arabino-heptonate binding site. NAD(+)-binding positions include F178–T181 and N189. Residue E193 participates in Zn(2+) binding. Residues E193–K196 and K249 contribute to the 7-phospho-2-dehydro-3-deoxy-D-arabino-heptonate site. Residue E259 is the Proton acceptor; for 3-dehydroquinate synthase activity of the active site. Residues R263 to N267 and H270 each bind 7-phospho-2-dehydro-3-deoxy-D-arabino-heptonate. H270 contacts Zn(2+). The active-site Proton acceptor; for 3-dehydroquinate synthase activity is the H274. 7-phospho-2-dehydro-3-deoxy-D-arabino-heptonate contacts are provided by H286 and K355. Residue H286 coordinates Zn(2+). Residues V396–V840 are EPSP synthase. Residue C822 is the For EPSP synthase activity of the active site. Residues D859 to C1049 form a shikimate kinase region. G866–S873 is an ATP binding site. The interval L1050–E1261 is 3-dehydroquinase. H1166 (proton acceptor; for 3-dehydroquinate dehydratase activity) is an active-site residue. K1195 functions as the Schiff-base intermediate with substrate; for 3-dehydroquinate dehydratase activity in the catalytic mechanism. Positions R1274–L1545 are shikimate dehydrogenase.

This sequence in the N-terminal section; belongs to the sugar phosphate cyclases superfamily. Dehydroquinate synthase family. It in the 2nd section; belongs to the EPSP synthase family. The protein in the 3rd section; belongs to the shikimate kinase family. In the 4th section; belongs to the type-I 3-dehydroquinase family. This sequence in the C-terminal section; belongs to the shikimate dehydrogenase family. In terms of assembly, homodimer. The cofactor is Zn(2+).

It is found in the cytoplasm. It carries out the reaction 7-phospho-2-dehydro-3-deoxy-D-arabino-heptonate = 3-dehydroquinate + phosphate. The catalysed reaction is 3-dehydroquinate = 3-dehydroshikimate + H2O. It catalyses the reaction shikimate + NADP(+) = 3-dehydroshikimate + NADPH + H(+). The enzyme catalyses shikimate + ATP = 3-phosphoshikimate + ADP + H(+). It carries out the reaction 3-phosphoshikimate + phosphoenolpyruvate = 5-O-(1-carboxyvinyl)-3-phosphoshikimate + phosphate. It participates in metabolic intermediate biosynthesis; chorismate biosynthesis; chorismate from D-erythrose 4-phosphate and phosphoenolpyruvate: step 2/7. Its pathway is metabolic intermediate biosynthesis; chorismate biosynthesis; chorismate from D-erythrose 4-phosphate and phosphoenolpyruvate: step 3/7. The protein operates within metabolic intermediate biosynthesis; chorismate biosynthesis; chorismate from D-erythrose 4-phosphate and phosphoenolpyruvate: step 4/7. It functions in the pathway metabolic intermediate biosynthesis; chorismate biosynthesis; chorismate from D-erythrose 4-phosphate and phosphoenolpyruvate: step 5/7. It participates in metabolic intermediate biosynthesis; chorismate biosynthesis; chorismate from D-erythrose 4-phosphate and phosphoenolpyruvate: step 6/7. In terms of biological role, the AROM polypeptide catalyzes 5 consecutive enzymatic reactions in prechorismate polyaromatic amino acid biosynthesis. The sequence is that of Pentafunctional AROM polypeptide from Komagataella phaffii (strain GS115 / ATCC 20864) (Yeast).